The primary structure comprises 741 residues: Pentatricopeptide repeat-containing protein At3g58590 (741 aa).

PPR repeat units follow at residues 48–78, 79–113, 114–146, 148–178, 179–213, 214–248, 249–279, 280–314, 315–349, 350–380, 381–414, 415–445, 446–481, 483–508, 509–543, 544–578, 580–610, 611–645, 646–680, and 681–715; these read PVYV…MPER, NKVS…GYLP, NQST…GLFM, DAFV…MPFK, SLET…GASL, TESS…GLDC, EISV…AGSW, DIVS…GFSP, NQGT…GCET, GIVL…IRDK, NIVC…GFRP, TEYT…GYED, NDYV…SVVP, NIVA…LEQP, DTVS…NIRP, DKYT…DFSC, DTFV…TREK, NLIT…GFKP, DRVS…GVEP, and EMDH…ADAP.

It belongs to the PPR family. P subfamily.

This is Pentatricopeptide repeat-containing protein At3g58590 from Arabidopsis thaliana (Mouse-ear cress).